The following is a 121-amino-acid chain: Flagellar protein FliT (121 aa).

Residues 1-50 (MNNAPHLYFAWQQLVEKSQLMLRLATEEQWDELIASEMAYVNAVQEIAHL) are required for homodimerization. Residues 60-98 (MQEQLRPMLHLILDNESKVKQLLQIRMDELAKLVGQSSV) are fliD binding.

It belongs to the FliT family. In terms of assembly, homodimer. Interacts with FliD and FlhC.

It localises to the cytoplasm. The protein localises to the cytosol. Its function is as follows. Dual-function protein that regulates the transcription of class 2 flagellar operons and that also acts as an export chaperone for the filament-capping protein FliD. As a transcriptional regulator, acts as an anti-FlhDC factor; it directly binds FlhC, thus inhibiting the binding of the FlhC/FlhD complex to class 2 promoters, resulting in decreased expression of class 2 flagellar operons. As a chaperone, effects FliD transition to the membrane by preventing its premature polymerization, and by directing it to the export apparatus. This is Flagellar protein FliT from Shigella flexneri serotype 5b (strain 8401).